A 135-amino-acid chain; its full sequence is Snaclec echicetin subunit alpha (135 aa).

Positions 1-4 (GADE) are cleaved as a signal peptide. Intrachain disulfides connect cysteine 6-cysteine 17, cysteine 34-cysteine 129, and cysteine 104-cysteine 121. Positions 13 to 130 (NGVYCYMLFK…CENTFPFMCK (118 aa)) constitute a C-type lectin domain.

This sequence belongs to the snaclec family. In terms of assembly, heterodimer of subunits alpha and beta; disulfide-linked. In terms of tissue distribution, expressed by the venom gland.

Its subcellular location is the secreted. Its function is as follows. Binding of echicetin to GPIbalpha (GP1BA) receptor on platelets alone results in inhibition of platelet aggregation, while binding to both GP1BA receptor and IgMk promotes platelet aggregation and signal transduction. The polypeptide is Snaclec echicetin subunit alpha (Echis carinatus (Saw-scaled viper)).